Here is a 348-residue protein sequence, read N- to C-terminus: Protein disulfide isomerase CRELD2 (348 aa).

Positions 1-22 (MHLPPAAAVGLLLLLLPPPARV) are cleaved as a signal peptide. The CXXC motif lies at 30-33 (CQRC). Cystine bridges form between Cys-30–Cys-33, Cys-139–Cys-153, Cys-147–Cys-165, and Cys-167–Cys-176. Residues 135 to 177 (DCQECQGGSQRPCSGNGHCDGDGSRQGDGSCQCHVGYKGPLCI) form the EGF-like 1 domain. Residues 192-239 (HSFCTACDESCKTCSGPTNKGCVECEVGWTRVEDACVDVDECAAETPP) form an FU 1 repeat. N-linked (GlcNAc...) asparagine glycosylation occurs at Asn-250. One copy of the FU 2 repeat lies at 252–299 (SYTCEECDSTCVGCTGKGPANCKECISGYSKQKGECADIDECSLETKV). The short motif at 262-265 (CVGC) is the CXXC element. 4 disulfide bridges follow: Cys-262–Cys-265, Cys-293–Cys-307, Cys-300–Cys-316, and Cys-318–Cys-328. In terms of domain architecture, EGF-like 2; calcium-binding spans 289 to 329 (DIDECSLETKVCKKENENCYNTPGSFVCVCPEGFEEDRRCL).

It belongs to the CRELD family. Interacts with CHRNA4. Component of a complex containing at least CRELD2, MANF, MATN3 and PDIA4.

It is found in the endoplasmic reticulum. The enzyme catalyses Catalyzes the rearrangement of -S-S- bonds in proteins.. In terms of biological role, protein disulfide isomerase. Might play a role in the unfolded protein response. May regulate transport of alpha4-beta2 neuronal acetylcholine receptor. This chain is Protein disulfide isomerase CRELD2 (CRELD2), found in Cricetulus griseus (Chinese hamster).